A 509-amino-acid polypeptide reads, in one-letter code: MALSSALDSLWHQLDQLLSLINRNIITGIIVLPVLYVLLKVIYNLYLSPLAGYPGPKLWAVSRLPWNRANMKGRISWKIRELHDKYGPVVRIAPDELSYTTSGAWKKIYGQRNPEFVKALDGRGIAPASIGGQRSLMTEHQDKHLRLRRAIDPAFSQRALREQESYFQDHSDNLVQKLKQRCKDGPLDMTTWYNLVAFDIVSDLAFGEPSGCVNNPDQPWIQAILARAKAIVWFQLAVQYGFMGLLNWMTPKYVTESRKKHIAMTEAKLKARVEAKNPGKDFMSYILENDEKLNHLELVMLSSNFIVAGSGTSAGGMSGLTYLLLRNPDKLEKLKQEIRGLFKSRADMTLQAVTSCKYLRACLNEGMRLYPPTPGSLPRFVPGKGEMIEGKWVPGGYAVGVNQLAAGHSERNFKKAREFHPERWLDEPDSEFKDDDRSAVQPFSYGQRGCIGRSMAYAEMSLTMAKLVWYFDWELDEPDNDWWNQQGTYLVWEKLPLQVKLTPVSDVVE.

A helical transmembrane segment spans residues 25 to 45 (IITGIIVLPVLYVLLKVIYNL). Position 450 (cysteine 450) interacts with heme.

This sequence belongs to the cytochrome P450 family. Heme is required as a cofactor.

Its subcellular location is the membrane. It participates in secondary metabolite biosynthesis. Its function is as follows. Cytochrome P450 monooxygenase; part of the gene cluster that mediates the biosynthesis of alternapyrone derivatives. Alternapyrone is a decaketide with octa-methylation from methionine on every C2 unit except the third unit. All the domains in the polyketide synthase alt5 are apparently involved in alternapyrone synthesis, that is, the 8 CMeT, 7 KR, 7 DH, and 4 ER reactions in the 9 KS-mediated condensation steps required for alternapyrone synthesis. the alternapyrone produced by alt5 might be intensively modified by cytochrome P450 monooxygenases alt1, alt2 and alt3 and FAD-dependent oxidoreductase alt4 present in the alt gene cluster. The chain is Cytochrome P450 monooxygenase alt3 from Alternaria solani.